The chain runs to 259 residues: Pyrroloquinoline-quinone synthase (259 aa).

Belongs to the PqqC family.

The enzyme catalyses 6-(2-amino-2-carboxyethyl)-7,8-dioxo-1,2,3,4,7,8-hexahydroquinoline-2,4-dicarboxylate + 3 O2 = pyrroloquinoline quinone + 2 H2O2 + 2 H2O + H(+). It participates in cofactor biosynthesis; pyrroloquinoline quinone biosynthesis. Ring cyclization and eight-electron oxidation of 3a-(2-amino-2-carboxyethyl)-4,5-dioxo-4,5,6,7,8,9-hexahydroquinoline-7,9-dicarboxylic-acid to PQQ. This Bradyrhizobium diazoefficiens (strain JCM 10833 / BCRC 13528 / IAM 13628 / NBRC 14792 / USDA 110) protein is Pyrroloquinoline-quinone synthase.